The sequence spans 372 residues: Cytochrome b (372 aa).

4 consecutive transmembrane segments (helical) span residues 25-45 (FGSM…FLAI), 69-90 (WIMQ…YIHI), 105-125 (WLSG…GYVL), and 170-190 (FFAL…IHII). Residues histidine 75 and histidine 89 each coordinate heme b. 2 residues coordinate heme b: histidine 174 and histidine 188. Histidine 193 contributes to the a ubiquinone binding site. Helical transmembrane passes span 218–238 (YKDM…LSFS), 280–300 (LGGT…PFTH), 312–332 (LSQA…WTAS), and 339–358 (FVTI…ITIP).

Belongs to the cytochrome b family. The cytochrome bc1 complex contains 3 respiratory subunits (MT-CYB, CYC1 and UQCRFS1), 2 core proteins (UQCRC1 and UQCRC2) and probably 6 low-molecular weight proteins. The cofactor is heme b.

It is found in the mitochondrion inner membrane. Functionally, component of the ubiquinol-cytochrome c reductase complex (complex III or cytochrome b-c1 complex) that is part of the mitochondrial respiratory chain. The b-c1 complex mediates electron transfer from ubiquinol to cytochrome c. Contributes to the generation of a proton gradient across the mitochondrial membrane that is then used for ATP synthesis. This is Cytochrome b (MT-CYB) from Naja multifasciata (Burrowing cobra).